Here is a 206-residue protein sequence, read N- to C-terminus: Ras-related protein Rab7 (206 aa).

Residues 15 to 22 (GDSGVGKT), 63 to 67 (DTAGQ), and 125 to 128 (NKVD) each bind GTP. Residues Cys205 and Cys206 are each lipidated (S-geranylgeranyl cysteine).

Belongs to the small GTPase superfamily. Rab family.

The protein localises to the cell membrane. In terms of biological role, protein transport. Probably involved in vesicular traffic. The sequence is that of Ras-related protein Rab7 from Cenchrus ciliaris (Buffelgrass).